The sequence spans 444 residues: Vacuolar protein sorting-associated protein 4 (444 aa).

Residues 2-80 (GDVNFLQKAI…KEYLDKSKNK (79 aa)) form the MIT domain. Residues 79 to 122 (NKKPVAVGGNKSNSAGSANGAGKSAKEDDEDMDPEDKKRNDSLS) form a disordered region. Low complexity predominate over residues 86–101 (GGNKSNSAGSANGAGK). An ATP-binding site is contributed by 175-182 (GPPGTGKS).

This sequence belongs to the AAA ATPase family.

It localises to the prevacuolar compartment membrane. The protein localises to the endosome membrane. The catalysed reaction is ATP + H2O = ADP + phosphate + H(+). Involved in intracellular protein transport probably out of a prevacuolar endosomal compartment. May be involved in the release of components of the bilayered coat from the endosomal membrane. The association with ESCRT-III complex mediates the ATP-dependent disassembly of the ESCRT-III complex. In Dictyostelium discoideum (Social amoeba), this protein is Vacuolar protein sorting-associated protein 4 (vps4).